We begin with the raw amino-acid sequence, 493 residues long: Sorting nexin-4 (493 aa).

Residues 1–77 (MAVIDQDNFS…ILDCTVSDPH (77 aa)) are disordered. The segment covering 7-28 (DNFSNISWHSEQNAESAASTAQ) has biased composition (polar residues). The segment covering 56-65 (MEHDELDHSG) has biased composition (basic and acidic residues). A PX domain is found at 68–190 (ILDCTVSDPH…AFLESPDWNA (123 aa)). A 1,2-diacyl-sn-glycero-3-phospho-(1D-myo-inositol-3-phosphate)-binding residues include Arg-111, Thr-113, Lys-137, and Arg-156. Coiled-coil stretches lie at residues 248 to 292 (EIKE…QKLI), 338 to 363 (SGTL…EYLN), and 405 to 442 (EQAR…QVSR).

The protein belongs to the sorting nexin family.

The protein localises to the cytoplasm. Its subcellular location is the membrane. It is found in the endosome membrane. In terms of biological role, sorting nexin, involved in the separation or division of vacuoles throughout the entire life cycle of the cells. Involved in retrieval of late-Golgi SNAREs from post-Golgi endosomes to the trans-Golgi network, for cytoplasm to vacuole transport (Cvt), and autophagy of large cargos including mitophagy, pexophagy and glycophagy. This Neurospora crassa (strain ATCC 24698 / 74-OR23-1A / CBS 708.71 / DSM 1257 / FGSC 987) protein is Sorting nexin-4 (vsp-5).